The following is a 398-amino-acid chain: Acetate kinase 1 (398 aa).

Mg(2+) is bound at residue Asn10. Lys17 contributes to the ATP binding site. Arg89 is a substrate binding site. The Proton donor/acceptor role is filled by Asp146. ATP-binding positions include 206–210, 281–283, and 329–333; these read HLGNG, DCR, and GIGEN. Glu384 is a Mg(2+) binding site.

The protein belongs to the acetokinase family. In terms of assembly, homodimer. The cofactor is Mg(2+). Mn(2+) is required as a cofactor.

Its subcellular location is the cytoplasm. The catalysed reaction is acetate + ATP = acetyl phosphate + ADP. Its pathway is metabolic intermediate biosynthesis; acetyl-CoA biosynthesis; acetyl-CoA from acetate: step 1/2. Catalyzes the formation of acetyl phosphate from acetate and ATP. Can also catalyze the reverse reaction. This is Acetate kinase 1 from Neisseria meningitidis serogroup B (strain ATCC BAA-335 / MC58).